The sequence spans 71 residues: UPF0346 protein BcerKBAB4_2120 (71 aa).

The protein belongs to the UPF0346 family.

The polypeptide is UPF0346 protein BcerKBAB4_2120 (Bacillus mycoides (strain KBAB4) (Bacillus weihenstephanensis)).